A 247-amino-acid polypeptide reads, in one-letter code: Homeobox-leucine zipper protein HOX15 (247 aa).

Residues 1–44 are disordered; sequence MAQDDEDVGLALGLSLGSGGHRRQRESRDEAPSSAAASLLTLRL. The span at 32-44 shows a compositional bias: low complexity; sequence PSSAAASLLTLRL. Positions 91–150 form a DNA-binding region, homeobox; the sequence is NSRKKLRLSKEQSALLEDRFKEHSTLNPKQKVALAKQLNLRPRQVEVWFQNRRARTKLKQ. Residues 149–193 are leucine-zipper; that stretch reads KQTEVDCELLKRCCETLTEENRRLHRELQQLRALTHSTAAGFFMA. The segment at 221-247 is disordered; the sequence is SPTAAADRTNKPTAPHLFSPFAKSAAC.

This sequence belongs to the HD-ZIP homeobox family. Class II subfamily. In terms of tissue distribution, expressed in seedlings, stems, leaf blades and panicles.

The protein resides in the nucleus. In terms of biological role, probable transcription factor. The chain is Homeobox-leucine zipper protein HOX15 (HOX15) from Oryza sativa subsp. japonica (Rice).